Consider the following 733-residue polypeptide: Polyribonucleotide nucleotidyltransferase (733 aa).

Residues Asp488 and Asp494 each coordinate Mg(2+). A KH domain is found at 555–614; sequence PRIEVMNIAVDKIRDVIGTGGKVIREIVEQTGAKINIEDDGTIRIASADAKTIEAAKRWI. An S1 motif domain is found at 624 to 692; it reads GVIYQGTVVK…ERGKVRLSMK (69 aa). Residues 711–722 are compositionally biased toward basic and acidic residues; the sequence is EQEKYTEETHKS. Positions 711-733 are disordered; the sequence is EQEKYTEETHKSENKRRRKKKEE. Residues 723–733 are compositionally biased toward basic residues; that stretch reads ENKRRRKKKEE.

Belongs to the polyribonucleotide nucleotidyltransferase family. Mg(2+) serves as cofactor.

It is found in the cytoplasm. The enzyme catalyses RNA(n+1) + phosphate = RNA(n) + a ribonucleoside 5'-diphosphate. In terms of biological role, involved in mRNA degradation. Catalyzes the phosphorolysis of single-stranded polyribonucleotides processively in the 3'- to 5'-direction. This Bartonella henselae (strain ATCC 49882 / DSM 28221 / CCUG 30454 / Houston 1) (Rochalimaea henselae) protein is Polyribonucleotide nucleotidyltransferase.